A 250-amino-acid polypeptide reads, in one-letter code: Golgi SNAP receptor complex member 1 (250 aa).

Ala-2 bears the N-acetylalanine mark. At 2–229 (AAGTSNYWED…QRINLRKRRD (228 aa)) the chain is on the cytoplasmic side. Positions 9–30 (WEDLRKQARQLENELDLKLVSF) form a coiled coil. A disordered region spans residues 38 to 59 (SHSSARDGGRDRYSSDTTPLLN). Over residues 41–51 (SARDGGRDRYS) the composition is skewed to basic and acidic residues. Residues 68-95 (ETMAIEIEQLLARLTGVNDKMAEYTNSA) are a coiled coil. Phosphoserine is present on Ser-141. Residues 230-250 (SLILGGVIGICTILLLLYAFH) traverse the membrane as a helical; Anchor for type IV membrane protein segment.

This sequence belongs to the GOSR1 family. Component of several multiprotein Golgi SNARE complexes. Identified in a SNARE complex with BET1, STX5 and YKT6, in a SNARE complex with BET1L, STX5 and YKT6, in a SNARE complex with STX5, GOSR2, SEC22B and BET1, and in complex with STX5 and COG3. Interacts with GABARAPL2.

The protein resides in the golgi apparatus membrane. Its function is as follows. Involved in transport from the ER to the Golgi apparatus as well as in intra-Golgi transport. It belongs to a super-family of proteins called t-SNAREs or soluble NSF (N-ethylmaleimide-sensitive factor) attachment protein receptor. May play a protective role against hydrogen peroxide induced cytotoxicity under glutathione depleted conditions in neuronal cells by regulating the intracellular ROS levels via inhibition of p38 MAPK (MAPK11, MAPK12, MAPK13 and MAPK14). Participates in docking and fusion stage of ER to cis-Golgi transport. Plays an important physiological role in VLDL-transport vesicle-Golgi fusion and thus in VLDL delivery to the hepatic cis-Golgi. The polypeptide is Golgi SNAP receptor complex member 1 (GOSR1) (Cricetulus griseus (Chinese hamster)).